Here is a 505-residue protein sequence, read N- to C-terminus: ATP synthase subunit alpha, chloroplastic (505 aa).

ATP is bound at residue 170–177 (GDRQTGKT).

It belongs to the ATPase alpha/beta chains family. In terms of assembly, F-type ATPases have 2 components, CF(1) - the catalytic core - and CF(0) - the membrane proton channel. CF(1) has five subunits: alpha(3), beta(3), gamma(1), delta(1), epsilon(1). CF(0) has four main subunits: a, b, b' and c.

Its subcellular location is the plastid. It localises to the chloroplast thylakoid membrane. It carries out the reaction ATP + H2O + 4 H(+)(in) = ADP + phosphate + 5 H(+)(out). Its function is as follows. Produces ATP from ADP in the presence of a proton gradient across the membrane. The alpha chain is a regulatory subunit. This is ATP synthase subunit alpha, chloroplastic from Carica papaya (Papaya).